Consider the following 729-residue polypeptide: Phenylalanine ammonia-lyase (729 aa).

The active-site Proton donor/acceptor is Tyr77. The segment at residues Ala182–Gly184 is a cross-link (5-imidazolinone (Ala-Gly)). Ser183 is modified (2,3-didehydroalanine (Ser)). Residues Asn241, Gln336, Arg342, Asn372, Lys443, Glu471, and Asn474 each coordinate (E)-cinnamate.

This sequence belongs to the PAL/histidase family. In terms of processing, contains an active site 4-methylidene-imidazol-5-one (MIO), which is formed autocatalytically by cyclization and dehydration of residues Ala-Ser-Gly.

The protein resides in the cytoplasm. It carries out the reaction L-phenylalanine = (E)-cinnamate + NH4(+). It functions in the pathway secondary metabolite biosynthesis. Its pathway is phenylpropanoid metabolism; trans-cinnamate biosynthesis; trans-cinnamate from L-phenylalanine: step 1/1. Its function is as follows. Phenylalanine ammonia-lyase; part of the gene cluster that mediates the biosynthesis of squalestatin S1 (SQS1, also known as zaragozic acid A), a heavily oxidized fungal polyketide that offers potent cholesterol lowering activity by targeting squalene synthase (SS). SQS1 is composed of a 2,8-dioxobicyclic[3.2.1]octane-3,4,5-tricarboxyclic acid core that is connected to two lipophilic polyketide arms. These initial steps feature the priming of an unusual benzoic acid starter unit onto the highly reducing polyketide synthase pks2, followed by oxaloacetate extension and product release to generate a tricarboxylic acid containing product. The phenylalanine ammonia lyase (PAL) M7 and the acyl-CoA ligase M9 are involved in transforming phenylalanine into benzoyl-CoA. The citrate synthase-like protein R3 is involved in connecting the C-alpha-carbons of the hexaketide chain and oxaloacetate to afford the tricarboxylic acid unit. The potential hydrolytic enzymes, M8 and M10, are in close proximity to pks2 and may participate in product release. On the other side, the tetraketide arm is synthesized by a the squalestatin tetraketide synthase pks1 and enzymatically esterified to the core in the last biosynthetic step, by the acetyltransferase M4. The biosynthesis of the tetraketide must involve 3 rounds of chain extension. After the first and second rounds methyl-transfer occurs, and in all rounds of extension the ketoreductase and dehydratase are active. The enoyl reductase and C-MeT of pks1 are not active in the final round of extension. The acetyltransferase M4 appears to have a broad substrate selectivity for its acyl CoA substrate, allowing the in vitro synthesis of novel squalestatins. The biosynthesis of SQS1 requires several oxidative steps likely performed by oxidoreductases M1, R1 and R2. Finally, in support of the identification of the cluster as being responsible for SQS1 production, the cluster contains a gene encoding a putative squalene synthase (SS) R6, suggesting a likely mechanism for self-resistance. The protein is Phenylalanine ammonia-lyase of Phoma sp. (strain ATCC 20986 / MF5453).